The sequence spans 198 residues: BPTI/Kunitz domain-containing protein 4 (198 aa).

The N-terminal stretch at 1–19 (MNLLVFFVYLXVCVIGSHS) is a signal peptide. 4 Antistasin-like domains span residues 31–56 (CGGA…ICKC), 56–85 (CRDA…TCEC), 85–114 (CKPL…TCFC), and 114–143 (CRPR…TCKC). In terms of domain architecture, BPTI/Kunitz inhibitor spans 146-196 (CLEPKKVGPCRALIPRYFYDVWSGKCKKFYWGGCQANGNNFKRKSQCCKRC). Intrachain disulfides connect C146–C196, C155–C179, and C171–C192.

In terms of tissue distribution, nacreous layer of shell (at protein level).

The protein localises to the secreted. The polypeptide is BPTI/Kunitz domain-containing protein 4 (Margaritifera margaritifera (Freshwater pearl mussel)).